The chain runs to 514 residues: 2,3-bisphosphoglycerate-independent phosphoglycerate mutase (514 aa).

The Mn(2+) site is built by Asp14 and Ser64. The active-site Phosphoserine intermediate is Ser64. Substrate contacts are provided by residues His125, 155–156 (RD), Arg187, Arg193, 263–266 (RADR), and Lys336. Mn(2+) is bound by residues Asp403, His407, Asp444, His445, and His463.

Belongs to the BPG-independent phosphoglycerate mutase family. As to quaternary structure, monomer. Requires Mn(2+) as cofactor.

It carries out the reaction (2R)-2-phosphoglycerate = (2R)-3-phosphoglycerate. The protein operates within carbohydrate degradation; glycolysis; pyruvate from D-glyceraldehyde 3-phosphate: step 3/5. In terms of biological role, catalyzes the interconversion of 2-phosphoglycerate and 3-phosphoglycerate. This Shewanella halifaxensis (strain HAW-EB4) protein is 2,3-bisphosphoglycerate-independent phosphoglycerate mutase.